The sequence spans 282 residues: MKLVLVSGRSGSGKSVALRVLEDLGYYCVDNLPLQMMESLLEQLKGRSDLVAISVDVRNMPSEEIQLEKQLAKLPKDTEILSFFLNSSDNVLLKRYSETRRLHPLSRSKVSLKEAIQLEGKLLDPIAKLVDHYIDTSNLNIYELSDKVREILLGTVDKELVINFESFGFKYGMPTEADFMFDVRFLPNPHWETELRPLTGLDEPVQQFLSQQPLVNKFIWQIENLLETWLPHLERNNRSYLTIAIGCTGGQHRSVYVTDQLAKLFNKGKHKVQARHRELKHD.

8–15 lines the ATP pocket; the sequence is GRSGSGKS. GTP is bound at residue 56 to 59; it reads DVRN.

The protein belongs to the RapZ-like family.

Its function is as follows. Displays ATPase and GTPase activities. This Shewanella loihica (strain ATCC BAA-1088 / PV-4) protein is Nucleotide-binding protein Shew_3314.